The sequence spans 139 residues: Large ribosomal subunit protein uL16 (139 aa).

Basic residues predominate over residues 1–20 (MLIPKRTKYRKQHRPVRRGM). Positions 1–21 (MLIPKRTKYRKQHRPVRRGMS) are disordered.

This sequence belongs to the universal ribosomal protein uL16 family. Part of the 50S ribosomal subunit.

In terms of biological role, binds 23S rRNA and is also seen to make contacts with the A and possibly P site tRNAs. The chain is Large ribosomal subunit protein uL16 from Bifidobacterium adolescentis (strain ATCC 15703 / DSM 20083 / NCTC 11814 / E194a).